Here is a 247-residue protein sequence, read N- to C-terminus: Diglucosylglycerate octanoyltransferase (247 aa).

Belongs to the OctT acyltransferase family. In terms of assembly, homotetramer.

The catalysed reaction is (2R)-2-O-[alpha-D-glucopyranosyl-(1-&gt;6)-alpha-D-glucopyranosyl]-glycerate + octanoyl-CoA = (2R)-2-O-[6-O-octanoyl-alpha-D-glucopyranosyl-(1-&gt;6)-alpha-D-glucopyranosyl]-glycerate + CoA. Sugar octanoyltransferase likely involved in the biosynthesis of mycobacterial methylglucose lipopolysaccharide (MGLP). Catalyzes the transfer of an octanoyl group from octanoyl-CoA to the C6 OH of the second glucose in diglucosylglycerate (DGG). DGG is the preferred acceptor, but to a lesser extent, GG (glucosylglycerate) can also be used as substrate. DGG and GG are the two earliest intermediates in MGLP biosynthesis. The sequence is that of Diglucosylglycerate octanoyltransferase from Mycobacterium tuberculosis (strain ATCC 25618 / H37Rv).